The chain runs to 250 residues: Triosephosphate isomerase (250 aa).

9–11 contacts substrate; sequence NWK. Catalysis depends on H95, which acts as the Electrophile. The active-site Proton acceptor is E167. Substrate is bound by residues G173, S213, and 234 to 235; that span reads GG.

Belongs to the triosephosphate isomerase family. As to quaternary structure, homodimer.

The protein resides in the cytoplasm. The enzyme catalyses D-glyceraldehyde 3-phosphate = dihydroxyacetone phosphate. The protein operates within carbohydrate biosynthesis; gluconeogenesis. Its pathway is carbohydrate degradation; glycolysis; D-glyceraldehyde 3-phosphate from glycerone phosphate: step 1/1. Functionally, involved in the gluconeogenesis. Catalyzes stereospecifically the conversion of dihydroxyacetone phosphate (DHAP) to D-glyceraldehyde-3-phosphate (G3P). In Flavobacterium psychrophilum (strain ATCC 49511 / DSM 21280 / CIP 103535 / JIP02/86), this protein is Triosephosphate isomerase.